A 256-amino-acid polypeptide reads, in one-letter code: UPF0246 protein HCH_04801 (256 aa).

This sequence belongs to the UPF0246 family.

The protein is UPF0246 protein HCH_04801 of Hahella chejuensis (strain KCTC 2396).